We begin with the raw amino-acid sequence, 777 residues long: NAD(P)H-quinone oxidoreductase subunit 5, chloroplastic (777 aa).

16 consecutive transmembrane segments (helical) span residues 9–29 (WIIP…LLLF), 40–60 (WSFP…YLSI), 89–109 (IDPL…LVLF), 125–145 (FAYL…SNLI), 147–167 (IYIF…FWFT), 185–205 (GDFG…SFEF), 220–240 (NQVH…GAVA), 259–279 (TPIS…FLVA), 290–312 (YIMN…LALA), 328–348 (LGYM…FHLI), 355–375 (ALLF…VGYS), 397–417 (TAFL…CFWS), 426–446 (WLYS…TAFY), 550–570 (LFSL…GIPF), 604–624 (FVTN…IATF), and 731–751 (IFIF…FFVL).

This sequence belongs to the complex I subunit 5 family. As to quaternary structure, NDH is composed of at least 16 different subunits, 5 of which are encoded in the nucleus.

It is found in the plastid. The protein localises to the chloroplast thylakoid membrane. The enzyme catalyses a plastoquinone + NADH + (n+1) H(+)(in) = a plastoquinol + NAD(+) + n H(+)(out). The catalysed reaction is a plastoquinone + NADPH + (n+1) H(+)(in) = a plastoquinol + NADP(+) + n H(+)(out). Functionally, NDH shuttles electrons from NAD(P)H:plastoquinone, via FMN and iron-sulfur (Fe-S) centers, to quinones in the photosynthetic chain and possibly in a chloroplast respiratory chain. The immediate electron acceptor for the enzyme in this species is believed to be plastoquinone. Couples the redox reaction to proton translocation, and thus conserves the redox energy in a proton gradient. This is NAD(P)H-quinone oxidoreductase subunit 5, chloroplastic (ndhF) from Oenothera elata subsp. hookeri (Hooker's evening primrose).